The sequence spans 376 residues: Flagellar P-ring protein (376 aa).

The first 29 residues, 1–29 (MTQRPFSLLSHLGRICLAAAMLAALPAQA), serve as a signal peptide directing secretion.

Belongs to the FlgI family. The basal body constitutes a major portion of the flagellar organelle and consists of four rings (L,P,S, and M) mounted on a central rod.

The protein resides in the periplasm. The protein localises to the bacterial flagellum basal body. Its function is as follows. Assembles around the rod to form the L-ring and probably protects the motor/basal body from shearing forces during rotation. In Bordetella avium (strain 197N), this protein is Flagellar P-ring protein.